We begin with the raw amino-acid sequence, 86 residues long: MSQQRGYRKSRRGYVTSNSMDKTIVVKIEDRVKHALYGKVIRKTSKVKAHDQGSIAGVGDLVLISETRPISATKRWRLVQILEKAK.

This sequence belongs to the universal ribosomal protein uS17 family. As to quaternary structure, part of the 30S ribosomal subunit.

Its function is as follows. One of the primary rRNA binding proteins, it binds specifically to the 5'-end of 16S ribosomal RNA. The sequence is that of Small ribosomal subunit protein uS17 from Tropheryma whipplei (strain TW08/27) (Whipple's bacillus).